An 871-amino-acid chain; its full sequence is Transient receptor potential cation channel subfamily V member 4 (871 aa).

Residues 1-68 are disordered; the sequence is MADSSEGPRA…GPGDGRPNLR (68 aa). The Cytoplasmic portion of the chain corresponds to 1–469; it reads MADSSEGPRA…RDKWRKFGAV (469 aa). The residue at position 110 (Tyr-110) is a Phosphotyrosine. ATP contacts are provided by residues Lys-192, Lys-197, Asn-201, 236 to 239, and Arg-248; that span reads YRGQ. ANK repeat units lie at residues 237–266 and 284–313; these read RGQT…DVHA and FGEL…KKAD. An a 1,2-diacyl-sn-glycero-3-phospho-(1D-myo-inositol-4,5-bisphosphate)-binding site is contributed by 249–251; that stretch reads RCK. A Phosphotyrosine modification is found at Tyr-253. A 1,2-diacyl-sn-glycero-3-phospho-(1D-myo-inositol-4,5-bisphosphate) is bound by residues 296-299 and Lys-344; that span reads NQPH. One copy of the ANK 3 repeat lies at 369 to 398; sequence DGLSPLMMAAKTGKIGIFQHIIRREVTDED. A helical transmembrane segment spans residues 470-490; that stretch reads SFYINVVSYLCAMVIFTLTAY. The Extracellular portion of the chain corresponds to 491–507; the sequence is YQPLEGTPPYPYRTTVD. The helical transmembrane segment at 508–534 threads the bilayer; the sequence is YLRLAGEVITLFTGVLFFFTNIKDLFM. Residues 535–547 lie on the Cytoplasmic side of the membrane; the sequence is KKCPGVNSLFIDG. A helical membrane pass occupies residues 548–568; that stretch reads SFQLLYFIYSVLVIVSAALYL. Residues 569-572 lie on the Extracellular side of the membrane; that stretch reads AGIE. The chain crosses the membrane as a helical span at residues 573-593; that stretch reads AYLAVMVFALVLGWMNALYFT. Over 594–608 the chain is Cytoplasmic; that stretch reads RGLKLTGTYSIMIQK. Residues 609-636 form a helical membrane-spanning segment; the sequence is ILFKDLFRFLLVYLLFMIGYASALVSLL. Residues 637–665 lie on the Extracellular side of the membrane; it reads NPCANMKVCNEDQTNCTVPTYPSCRDSET. The pore-forming intramembrane region spans 666 to 685; that stretch reads FSTFLLDLFKLTIGMGDLEM. The Selectivity filter motif lies at 679 to 682; the sequence is GMGD. Asp-682 provides a ligand contact to Ca(2+). The Extracellular portion of the chain corresponds to 686 to 693; it reads LSSTKYPV. A helical membrane pass occupies residues 694-722; that stretch reads VFIILLVTYIILTFVLLLNMLIALMGETV. Residues 723-871 are Cytoplasmic-facing; it reads GQVSKESKHI…RKWRTDDAPL (149 aa). Position 805 is a phosphotyrosine (Tyr-805). The interval 812–831 is interaction with calmodulin and ITPR3; the sequence is HTVGRLRRDRWSSVVPRVVE. Ser-824 bears the Phosphoserine mark. The segment at 849–871 is disordered; the sequence is GNPRCDGHQQGYPRKWRTDDAPL.

This sequence belongs to the transient receptor (TC 1.A.4) family. TrpV subfamily. TRPV4 sub-subfamily. Homotetramer. Self-associates in an isoform-specific manner. Isoform 1 and isoform 5 can oligomerize, but isoform 2, isoform 4 and isoform 6 cannot oligomerize. Interacts with calmodulin. Interacts with Map7 and Src family Tyr protein kinases LYN, SRC, FYN, HCK, LCK and YES. Interacts with CTNNB1. The TRPV4 and CTNNB1 complex can interact with CDH1. Interacts with PACSIN1, PACSIN2 and PACSIN3 (via SH3 domain). Part of a complex containing MLC1, AQP4, HEPACAM and ATP1B1. Interacts with ITPR3. Interacts with AQP5; the interaction is probably indirect and regulates TRPV4 activation by hypotonicity. Interacts with ANO1. Interacts (via C-terminus) with PKD2 (via C-terminus). Interacts with DDX3X; this interaction is decreased when the channel is activated. Post-translationally, N-glycosylated. In terms of tissue distribution, found in the synoviocytes from patients with (RA) and without (CTR) rheumatoid arthritis (at protein level).

It localises to the cell membrane. It is found in the apical cell membrane. Its subcellular location is the cell junction. The protein resides in the adherens junction. The protein localises to the cell projection. It localises to the cilium. It is found in the endoplasmic reticulum. The catalysed reaction is Ca(2+)(in) = Ca(2+)(out). With respect to regulation, channel activation is inhibited by binding to phosphatidylinositol-4,5-bisphosphate, and to a much lesser degree by phosphatidylinositol-3,4,5-trisphosphate. Not inhibited by phosphatidylinositol-3,4-bisphosphate and phosphatidylinositol-3,5-bisphosphate. Its function is as follows. Non-selective calcium permeant cation channel involved in osmotic sensitivity and mechanosensitivity. Activation by exposure to hypotonicity within the physiological range exhibits an outward rectification. Also activated by heat, low pH, citrate and phorbol esters. Increase of intracellular Ca(2+) potentiates currents. Channel activity seems to be regulated by a calmodulin-dependent mechanism with a negative feedback mechanism. Promotes cell-cell junction formation in skin keratinocytes and plays an important role in the formation and/or maintenance of functional intercellular barriers. Acts as a regulator of intracellular Ca(2+) in synoviocytes. Plays an obligatory role as a molecular component in the nonselective cation channel activation induced by 4-alpha-phorbol 12,13-didecanoate and hypotonic stimulation in synoviocytes and also regulates production of IL-8. Together with PKD2, forms mechano- and thermosensitive channels in cilium. Negatively regulates expression of PPARGC1A, UCP1, oxidative metabolism and respiration in adipocytes. Regulates expression of chemokines and cytokines related to pro-inflammatory pathway in adipocytes. Together with AQP5, controls regulatory volume decrease in salivary epithelial cells. Required for normal development and maintenance of bone and cartilage. In its inactive state, may sequester DDX3X at the plasma membrane. When activated, the interaction between both proteins is affected and DDX3X relocalizes to the nucleus. In neurons of the central nervous system, could play a role in triggering voluntary water intake in response to increased sodium concentration in body fluid. Non-selective calcium permeant cation channel involved in osmotic sensitivity and mechanosensitivity. Activation by exposure to hypotonicity within the physiological range exhibits an outward rectification. Also activated by phorbol esters. Has the same channel activity as isoform 1, and is activated by the same stimuli. Functionally, lacks channel activity, due to impaired oligomerization and intracellular retention. In terms of biological role, (Microbial infection) Facilitates hepatitis C virus (HCV) replication, possibly through its action on DDX3X. Its function is as follows. (Microbial infection) Facilitates Dengue virus (DENV) replication, possibly through its action on DDX3X. (Microbial infection) Facilitates Zika virus (ZIKV) replication, possibly through its action on DDX3X. This Homo sapiens (Human) protein is Transient receptor potential cation channel subfamily V member 4 (TRPV4).